A 445-amino-acid polypeptide reads, in one-letter code: C4-dicarboxylate transport protein (445 aa).

Transmembrane regions (helical) follow at residues 24–44 (VLYVQVLFAIVVGVLVGWLSP), 62–82 (LIKMVIAPIIFCTVVSGIAHI), 105–125 (FALVLGLIVGNLFPVGHGLAA), 163–183 (GDILQVLLFAVLFGFALMALG), 201–221 (FGVIAIVMKAAPIGAFGAMAF), 234–254 (LIGLVALFYATSALFVVLVLG), 322–342 (IYMTLATLFIAQALGIELSFG), and 370–390 (AGTLAAVNPALVPGMAIVFSI).

The protein belongs to the dicarboxylate/amino acid:cation symporter (DAACS) (TC 2.A.23) family.

The protein resides in the cell inner membrane. Responsible for the transport of dicarboxylates such as succinate, fumarate, and malate from the periplasm across the membrane. The polypeptide is C4-dicarboxylate transport protein (Rhodopseudomonas palustris (strain ATCC BAA-98 / CGA009)).